Here is a 362-residue protein sequence, read N- to C-terminus: E3 ubiquitin-protein ligase TM129 (362 aa).

Residues 1–6 (MDSPEV) lie on the Lumenal side of the membrane. A helical transmembrane segment spans residues 7–27 (TFTLAYLVFAVCFVFTPTEFH). Residues 28–56 (SAGLTVQNLLSGWLGSEDAAFVPYHLRRT) are Cytoplasmic-facing. The chain crosses the membrane as a helical span at residues 57–77 (AATLLCHSLLPLGYYVGMCFA). Residues 78-94 (ASEKQLYYPSQTPETWR) are Lumenal-facing. Residues 95 to 115 (AFLLLALMLPAIACTLIYYWS) form a helical membrane-spanning segment. Over 116-362 (RDHWACHPLA…FCVLDVCAVR (247 aa)) the chain is Cytoplasmic. The RING-type; degenerate zinc-finger motif lies at 285 to 350 (CIGCMQTQAS…ASRVPCPTCR (66 aa)).

Belongs to the TMEM129 family. In terms of assembly, integral component of ER-resident dislocation complexes.

The protein localises to the endoplasmic reticulum membrane. It catalyses the reaction S-ubiquitinyl-[E2 ubiquitin-conjugating enzyme]-L-cysteine + [acceptor protein]-L-lysine = [E2 ubiquitin-conjugating enzyme]-L-cysteine + N(6)-ubiquitinyl-[acceptor protein]-L-lysine.. Its pathway is protein modification; protein ubiquitination. E3 ubiquitin-protein ligase involved in ER-associated protein degradation, preferentially associates with the E2 enzyme UBE2J2. Exploited by viral US11 proteins to mediate HLA class I proteins degradation. The protein is E3 ubiquitin-protein ligase TM129 (TMEM129) of Bos taurus (Bovine).